A 289-amino-acid polypeptide reads, in one-letter code: Glucosamine-6-phosphate deaminase 1 (289 aa).

Lys-64 is modified (N6-acetyllysine). Asp-72 (proton acceptor; for enolization step) is an active-site residue. Asp-141 (for ring-opening step) is an active-site residue. His-143 acts as the Proton acceptor; for ring-opening step in catalysis. The active-site For ring-opening step is the Glu-148. Thr-161 carries the phosphothreonine modification.

Belongs to the glucosamine/galactosamine-6-phosphate isomerase family. In terms of assembly, homohexamer.

It localises to the cytoplasm. It carries out the reaction alpha-D-glucosamine 6-phosphate + H2O = beta-D-fructose 6-phosphate + NH4(+). It participates in nucleotide-sugar biosynthesis; UDP-N-acetyl-alpha-D-glucosamine biosynthesis; alpha-D-glucosamine 6-phosphate from D-fructose 6-phosphate: step 1/1. Allosterically activated by N-acetylglucosamine-6-phosphate (GlcNAc6P). In terms of biological role, catalyzes the reversible conversion of alpha-D-glucosamine 6-phosphate (GlcN-6P) into beta-D-fructose 6-phosphate (Fru-6P) and ammonium ion, a regulatory reaction step in de novo uridine diphosphate-N-acetyl-alpha-D-glucosamine (UDP-GlcNAc) biosynthesis via hexosamine pathway. Deamination is coupled to aldo-keto isomerization mediating the metabolic flux from UDP-GlcNAc toward Fru-6P. At high ammonium level can drive amination and isomerization of Fru-6P toward hexosamines and UDP-GlcNAc synthesis. Has a role in fine tuning the metabolic fluctuations of cytosolic UDP-GlcNAc and their effects on hyaluronan synthesis that occur during tissue remodeling. Seems to trigger calcium oscillations in mammalian eggs. These oscillations serve as the essential trigger for egg activation and early development of the embryo. This Homo sapiens (Human) protein is Glucosamine-6-phosphate deaminase 1.